Reading from the N-terminus, the 83-residue chain is Disintegrin bitistatin (83 aa).

The Disintegrin domain maps to 2–83; it reads PPVCGNKILE…GKSSDCPWNH (82 aa). Disulfide bonds link Cys-5–Cys-24, Cys-5–Cys-34, Cys-16–Cys-29, Cys-16–Cys-34, Cys-18–Cys-24, Cys-18–Cys-29, Cys-28–Cys-51, Cys-42–Cys-48, Cys-47–Cys-72, and Cys-60–Cys-79. The short motif at 64 to 66 is the Cell attachment site element; that stretch reads RGD.

It belongs to the venom metalloproteinase (M12B) family. P-II subfamily. P-IIa sub-subfamily. As to quaternary structure, monomer. Post-translationally, exists in 3 forms in the venom. The forms A, B, and C are present at 53%, 32% and 15%. The forms A and B differ by their disulfide bond pattern in the N-terminal part. No information is known about form C. In terms of tissue distribution, expressed by the venom gland.

It localises to the secreted. Its function is as follows. Inhibits fibrinogen interaction with platelets. Acts by binding to alpha-IIb/beta-3 (ITGA2B/ITGB3) on the platelet surface and inhibits aggregation induced by ADP, thrombin, platelet-activating factor and collagen. This Bitis arietans (African puff adder) protein is Disintegrin bitistatin.